Here is a 601-residue protein sequence, read N- to C-terminus: ATP-dependent lipid A-core flippase (601 aa).

5 helical membrane-spanning segments follow: residues 33 to 53 (CVAVVAMIAYAAITPFFAKLI), 72 to 92 (VSLMLIGLSVLRGIAGFLSEY), 158 to 178 (VIGLMALMVYQNPVLSLVFLV), 255 to 275 (LGGGVIHLISVAGVAGILYVV), and 283 to 303 (TITPGSLMAFIAAMAMMLSPI). Residues 34-315 (VAVVAMIAYA…LSQVVSVMQR (282 aa)) enclose the ABC transmembrane type-1 domain. The region spanning 347 to 583 (IEYRHVSLVY…RGGYADLYAM (237 aa)) is the ABC transporter domain. An ATP-binding site is contributed by 381-388 (GQSGSGKT).

Belongs to the ABC transporter superfamily. Lipid exporter (TC 3.A.1.106) family. As to quaternary structure, homodimer.

Its subcellular location is the cell inner membrane. It catalyses the reaction ATP + H2O + lipid A-core oligosaccharideSide 1 = ADP + phosphate + lipid A-core oligosaccharideSide 2.. Involved in lipopolysaccharide (LPS) biosynthesis. Translocates lipid A-core from the inner to the outer leaflet of the inner membrane. Transmembrane domains (TMD) form a pore in the inner membrane and the ATP-binding domain (NBD) is responsible for energy generation. In Methylococcus capsulatus (strain ATCC 33009 / NCIMB 11132 / Bath), this protein is ATP-dependent lipid A-core flippase.